A 513-amino-acid polypeptide reads, in one-letter code: ATP synthase subunit alpha (513 aa).

169-176 (GDRQTGKT) lines the ATP pocket.

The protein belongs to the ATPase alpha/beta chains family. In terms of assembly, F-type ATPases have 2 components, CF(1) - the catalytic core - and CF(0) - the membrane proton channel. CF(1) has five subunits: alpha(3), beta(3), gamma(1), delta(1), epsilon(1). CF(0) has three main subunits: a(1), b(2) and c(9-12). The alpha and beta chains form an alternating ring which encloses part of the gamma chain. CF(1) is attached to CF(0) by a central stalk formed by the gamma and epsilon chains, while a peripheral stalk is formed by the delta and b chains.

Its subcellular location is the cell inner membrane. It catalyses the reaction ATP + H2O + 4 H(+)(in) = ADP + phosphate + 5 H(+)(out). Its function is as follows. Produces ATP from ADP in the presence of a proton gradient across the membrane. The alpha chain is a regulatory subunit. The protein is ATP synthase subunit alpha of Pasteurella multocida (strain Pm70).